The primary structure comprises 410 residues: Argininosuccinate synthase (410 aa).

9–17 (AYSGGLDTS) contacts ATP. An L-citrulline-binding site is contributed by Tyr-86. Gly-116 contacts ATP. L-aspartate-binding residues include Thr-118, Asn-122, and Asp-123. Asn-122 is an L-citrulline binding site. Positions 126, 174, 259, and 271 each coordinate L-citrulline.

The protein belongs to the argininosuccinate synthase family. Type 1 subfamily. As to quaternary structure, homotetramer.

The protein resides in the cytoplasm. The enzyme catalyses L-citrulline + L-aspartate + ATP = 2-(N(omega)-L-arginino)succinate + AMP + diphosphate + H(+). The protein operates within amino-acid biosynthesis; L-arginine biosynthesis; L-arginine from L-ornithine and carbamoyl phosphate: step 2/3. The chain is Argininosuccinate synthase from Limosilactobacillus reuteri (strain DSM 20016) (Lactobacillus reuteri).